Here is a 362-residue protein sequence, read N- to C-terminus: Methionine import ATP-binding protein MetN (362 aa).

Residues 2–241 (IHIKNLSKTY…PQHDVTRAMV (240 aa)) form the ABC transporter domain. Residue 38–45 (GPSGAGKS) coordinates ATP.

Belongs to the ABC transporter superfamily. Methionine importer (TC 3.A.1.24) family. The complex is composed of two ATP-binding proteins (MetN), two transmembrane proteins (MetI) and a solute-binding protein (MetQ).

The protein localises to the cell inner membrane. It catalyses the reaction L-methionine(out) + ATP + H2O = L-methionine(in) + ADP + phosphate + H(+). The catalysed reaction is D-methionine(out) + ATP + H2O = D-methionine(in) + ADP + phosphate + H(+). Its function is as follows. Part of the ABC transporter complex MetNIQ involved in methionine import. Responsible for energy coupling to the transport system. The protein is Methionine import ATP-binding protein MetN of Bordetella avium (strain 197N).